The sequence spans 207 residues: Holliday junction branch migration complex subunit RuvA (207 aa).

Positions 1–68 (MIGYLQGSLA…EDQWLLFGFL (68 aa)) are domain I. Positions 69-147 (QMAERDLFRQ…EWREEAGLLP (79 aa)) are domain II. The flexible linker stretch occupies residues 148–158 (SATAAPIAAVQ). Positions 158–207 (QEDVEMTLLALGYNNREILQALTAIAQENLVQSGQPAEDWIREAIAWLSR) are domain III.

The protein belongs to the RuvA family. Homotetramer. Forms an RuvA(8)-RuvB(12)-Holliday junction (HJ) complex. HJ DNA is sandwiched between 2 RuvA tetramers; dsDNA enters through RuvA and exits via RuvB. An RuvB hexamer assembles on each DNA strand where it exits the tetramer. Each RuvB hexamer is contacted by two RuvA subunits (via domain III) on 2 adjacent RuvB subunits; this complex drives branch migration. In the full resolvosome a probable DNA-RuvA(4)-RuvB(12)-RuvC(2) complex forms which resolves the HJ.

Its subcellular location is the cytoplasm. Functionally, the RuvA-RuvB-RuvC complex processes Holliday junction (HJ) DNA during genetic recombination and DNA repair, while the RuvA-RuvB complex plays an important role in the rescue of blocked DNA replication forks via replication fork reversal (RFR). RuvA specifically binds to HJ cruciform DNA, conferring on it an open structure. The RuvB hexamer acts as an ATP-dependent pump, pulling dsDNA into and through the RuvAB complex. HJ branch migration allows RuvC to scan DNA until it finds its consensus sequence, where it cleaves and resolves the cruciform DNA. The protein is Holliday junction branch migration complex subunit RuvA of Synechococcus elongatus (strain ATCC 33912 / PCC 7942 / FACHB-805) (Anacystis nidulans R2).